Consider the following 104-residue polypeptide: Naphthalene 1,2-dioxygenase/salicylate 5-hydroxylase systems, ferredoxin component (104 aa).

The Rieske domain occupies 6-101; the sequence is IDAACLDDIP…VKIENMRVML (96 aa). Positions 45, 47, 64, and 67 each coordinate [2Fe-2S] cluster.

Belongs to the bacterial ring-hydroxylating dioxygenase ferredoxin component family. In terms of assembly, ferredoxin NagAb belongs to both the salicylate 5-hydroxylase (S5H) and the naphthalene 1,2-dioxygenase (NDO) multicomponent enzyme systems. The NDO multicomponent enzyme system is composed of an electron transfer component and a dioxygenase component (iron sulfur protein (ISP)). The electron transfer component is composed of a ferredoxin reductase (NagAa) and a ferredoxin (NagAb), and the dioxygenase component is formed by a large alpha subunit (NagAc) and a small beta subunit (NagAd). The S5H multicomponent enzyme system is composed of an electron transfer component and a monooxygenase component. The electron transfer component is composed of a ferredoxin reductase (NagAa) and a ferredoxin (NagAb), and the monooxygenase component is formed by a large subunit (NagG) and a small subunit (NagH). It depends on [2Fe-2S] cluster as a cofactor.

The protein operates within aromatic compound metabolism; naphthalene degradation. Functionally, component of two multicomponent enzyme systems which are involved in the catabolism of naphthalene. Plays a role as an electron transfer component for both salicylate 5-hydroxylase (S5H) and naphthalene 1,2-dioxygenase (NDO) systems, by transferring electrons to the oxygenase components. The polypeptide is Naphthalene 1,2-dioxygenase/salicylate 5-hydroxylase systems, ferredoxin component (Ralstonia sp).